A 159-amino-acid polypeptide reads, in one-letter code: Transcription antitermination protein NusB (159 aa).

This sequence belongs to the NusB family.

In terms of biological role, involved in transcription antitermination. Required for transcription of ribosomal RNA (rRNA) genes. Binds specifically to the boxA antiterminator sequence of the ribosomal RNA (rrn) operons. In Xanthomonas campestris pv. campestris (strain 8004), this protein is Transcription antitermination protein NusB.